The chain runs to 53 residues: Large ribosomal subunit protein eL24 (53 aa).

Cys-4, Cys-7, Cys-30, and Cys-34 together coordinate Zn(2+). The C4-type zinc finger occupies 4–34; the sequence is CSFCNKEIEEGTGKMYVKKDGSIYFFCSSKC.

The protein belongs to the eukaryotic ribosomal protein eL24 family. As to quaternary structure, part of the 50S ribosomal subunit. Forms a cluster with proteins L3 and L14. Zn(2+) is required as a cofactor.

Functionally, binds to the 23S rRNA. The chain is Large ribosomal subunit protein eL24 from Methanobrevibacter smithii (strain ATCC 35061 / DSM 861 / OCM 144 / PS).